We begin with the raw amino-acid sequence, 326 residues long: Cyclin-dependent kinase B2-1 (326 aa).

The Protein kinase domain occupies 28-318 (YEKLEKVGEG…AKKAMEHPYF (291 aa)). Residues 34–42 (VGEGTYGKV) and Lys-57 each bind ATP. Thr-38 carries the post-translational modification Phosphothreonine. Tyr-39 is modified (phosphotyrosine). The active-site Proton acceptor is the Asp-159. Residue Thr-193 is modified to Phosphothreonine.

This sequence belongs to the protein kinase superfamily. CMGC Ser/Thr protein kinase family. CDC2/CDKX subfamily. As to quaternary structure, interacts with CYCB2-1 and CYCB2-2. Binding to CYCB2-1 or CYCB2-2 activates CDK kinase. Expressed in the dividing region of the root apex and the intercalary meristem of internodes.

It is found in the nucleus. The protein localises to the cytoplasm. The protein resides in the cytoskeleton. Its subcellular location is the spindle. It localises to the phragmoplast. It carries out the reaction L-seryl-[protein] + ATP = O-phospho-L-seryl-[protein] + ADP + H(+). It catalyses the reaction L-threonyl-[protein] + ATP = O-phospho-L-threonyl-[protein] + ADP + H(+). The enzyme catalyses [DNA-directed RNA polymerase] + ATP = phospho-[DNA-directed RNA polymerase] + ADP + H(+). Its function is as follows. Forms a complex with CYCB2-1 or CYCB2-2 that activates CDK kinase in tobacco BY2 cells during G2/M (mitosis) phases. May be involved in the regulation of the cell cycle at the G2/M transition. In Oryza sativa subsp. japonica (Rice), this protein is Cyclin-dependent kinase B2-1 (CDKB2-1).